Consider the following 142-residue polypeptide: Large ribosomal subunit protein uL11 (142 aa).

Belongs to the universal ribosomal protein uL11 family. As to quaternary structure, part of the ribosomal stalk of the 50S ribosomal subunit. Interacts with L10 and the large rRNA to form the base of the stalk. L10 forms an elongated spine to which L12 dimers bind in a sequential fashion forming a multimeric L10(L12)X complex. Post-translationally, one or more lysine residues are methylated.

Its function is as follows. Forms part of the ribosomal stalk which helps the ribosome interact with GTP-bound translation factors. This chain is Large ribosomal subunit protein uL11, found in Shewanella baltica (strain OS223).